A 537-amino-acid polypeptide reads, in one-letter code: O-phosphoserine--tRNA(Cys) ligase (537 aa).

Substrate contacts are provided by residues 186-188 (HMT), 231-233 (SAS), 273-274 (YY), and N317.

It belongs to the class-II aminoacyl-tRNA synthetase family. O-phosphoseryl-tRNA(Cys) synthetase subfamily. In terms of assembly, homotetramer. Interacts with SepCysS.

The catalysed reaction is tRNA(Cys) + O-phospho-L-serine + ATP = O-phospho-L-seryl-tRNA(Cys) + AMP + diphosphate. In terms of biological role, catalyzes the attachment of O-phosphoserine (Sep) to tRNA(Cys). The chain is O-phosphoserine--tRNA(Cys) ligase from Methanococcus vannielii (strain ATCC 35089 / DSM 1224 / JCM 13029 / OCM 148 / SB).